We begin with the raw amino-acid sequence, 629 residues long: tRNA uridine 5-carboxymethylaminomethyl modification enzyme MnmG (629 aa).

FAD is bound by residues 13-18 (GGGHAG), V125, and S180. Position 273–287 (273–287 (GPRYCPSIEDKVMRF)) interacts with NAD(+). Q370 contacts FAD.

This sequence belongs to the MnmG family. As to quaternary structure, homodimer. Heterotetramer of two MnmE and two MnmG subunits. FAD is required as a cofactor.

Its subcellular location is the cytoplasm. NAD-binding protein involved in the addition of a carboxymethylaminomethyl (cmnm) group at the wobble position (U34) of certain tRNAs, forming tRNA-cmnm(5)s(2)U34. The chain is tRNA uridine 5-carboxymethylaminomethyl modification enzyme MnmG from Escherichia coli O139:H28 (strain E24377A / ETEC).